Consider the following 241-residue polypeptide: Adenosylcobinamide-GDP ribazoletransferase (241 aa).

5 consecutive transmembrane segments (helical) span residues 24–44 (IVFFFTITGAITGLMAASIFY), 48–68 (FINQLLASVASVSFLIIIYGF), 103–123 (VVTFFIIYIITISLLSSFNSI), 175–195 (VIILIFLIFYKYIIFTMFSLI), and 218–238 (IIGFTGELSRLISLLLILISF).

The protein belongs to the CobS family. It depends on Mg(2+) as a cofactor.

The protein localises to the cell membrane. The catalysed reaction is alpha-ribazole + adenosylcob(III)inamide-GDP = adenosylcob(III)alamin + GMP + H(+). It catalyses the reaction alpha-ribazole 5'-phosphate + adenosylcob(III)inamide-GDP = adenosylcob(III)alamin 5'-phosphate + GMP + H(+). It participates in cofactor biosynthesis; adenosylcobalamin biosynthesis; adenosylcobalamin from cob(II)yrinate a,c-diamide: step 7/7. Its function is as follows. Joins adenosylcobinamide-GDP and alpha-ribazole to generate adenosylcobalamin (Ado-cobalamin). Also synthesizes adenosylcobalamin 5'-phosphate from adenosylcobinamide-GDP and alpha-ribazole 5'-phosphate. The polypeptide is Adenosylcobinamide-GDP ribazoletransferase (Picrophilus torridus (strain ATCC 700027 / DSM 9790 / JCM 10055 / NBRC 100828 / KAW 2/3)).